A 367-amino-acid polypeptide reads, in one-letter code: Quinolinate synthase (367 aa).

Positions 45 and 62 each coordinate iminosuccinate. C109 is a [4Fe-4S] cluster binding site. Iminosuccinate is bound by residues Y140–N142 and S161. [4Fe-4S] cluster is bound at residue C229. Iminosuccinate is bound by residues H255–E257 and T272. A [4Fe-4S] cluster-binding site is contributed by C319.

This sequence belongs to the quinolinate synthase family. Type 3 subfamily. [4Fe-4S] cluster is required as a cofactor.

It localises to the cytoplasm. It carries out the reaction iminosuccinate + dihydroxyacetone phosphate = quinolinate + phosphate + 2 H2O + H(+). The protein operates within cofactor biosynthesis; NAD(+) biosynthesis; quinolinate from iminoaspartate: step 1/1. Its function is as follows. Catalyzes the condensation of iminoaspartate with dihydroxyacetone phosphate to form quinolinate. This chain is Quinolinate synthase, found in Geobacillus kaustophilus (strain HTA426).